A 79-amino-acid chain; its full sequence is Acyl carrier protein (79 aa).

The Carrier domain occupies Ser-2–Ala-77. Ser-37 carries the O-(pantetheine 4'-phosphoryl)serine modification.

This sequence belongs to the acyl carrier protein (ACP) family. 4'-phosphopantetheine is transferred from CoA to a specific serine of apo-ACP by AcpS. This modification is essential for activity because fatty acids are bound in thioester linkage to the sulfhydryl of the prosthetic group.

The protein localises to the cytoplasm. The protein operates within lipid metabolism; fatty acid biosynthesis. Carrier of the growing fatty acid chain in fatty acid biosynthesis. This chain is Acyl carrier protein, found in Azospirillum brasilense.